The sequence spans 459 residues: MSLTVYNTRTRKKEPFVPVNPQSIKMYVCGPTVYNLVHIGNARPVVVFDVLFRVLKTLYPEVVYARNITDIDDKIMKAAKENGESISALTARFTEAYIEDMAALHNLPPSIAPKATAHIEPMIAMVAALVEKGHAYEADGHVLFDVQSMKNYGKLSNRALEDMLDGARVEVADYKRYAGDFVLWKPSADDEPGWASPWGRGRPGWHLECSAMIETHLGNTIDIHGGGRDLIFPHHENELAQSECAHGGEEYVRYWMHNGYVNIDGEKMSKSLGNFRTVRDLLQQYHGETIRFALLSAQYRSELDFSVSLLDQSKAGLDTLYGALKNAPATSTDAVDLSDNAGYLALLDDLNTPQVIAELHRLAKIVNKNEGQEAAIAAAQLQALGGLLGLLQQEPEAWFKATTSGSSELSAEDIEQLIVERKDAKLAKNYARADEIRKELTEKGIALEDSASGTSWKRI.

Residue Cys29 participates in Zn(2+) binding. Positions 31–41 (PTVYNLVHIGN) match the 'HIGH' region motif. The Zn(2+) site is built by Cys209, His234, and Glu238. Positions 267 to 271 (KMSKS) match the 'KMSKS' region motif. Lys270 is a binding site for ATP.

It belongs to the class-I aminoacyl-tRNA synthetase family. In terms of assembly, monomer. It depends on Zn(2+) as a cofactor.

The protein localises to the cytoplasm. It carries out the reaction tRNA(Cys) + L-cysteine + ATP = L-cysteinyl-tRNA(Cys) + AMP + diphosphate. The chain is Cysteine--tRNA ligase from Saccharophagus degradans (strain 2-40 / ATCC 43961 / DSM 17024).